We begin with the raw amino-acid sequence, 620 residues long: 1-deoxy-D-xylulose-5-phosphate synthase (620 aa).

Thiamine diphosphate-binding positions include histidine 80 and 121–123 (GHS). Aspartate 152 provides a ligand contact to Mg(2+). Residues 153 to 154 (GA), asparagine 181, tyrosine 288, and glutamate 370 each bind thiamine diphosphate. Asparagine 181 contributes to the Mg(2+) binding site.

This sequence belongs to the transketolase family. DXPS subfamily. As to quaternary structure, homodimer. The cofactor is Mg(2+). Thiamine diphosphate serves as cofactor.

It catalyses the reaction D-glyceraldehyde 3-phosphate + pyruvate + H(+) = 1-deoxy-D-xylulose 5-phosphate + CO2. It participates in metabolic intermediate biosynthesis; 1-deoxy-D-xylulose 5-phosphate biosynthesis; 1-deoxy-D-xylulose 5-phosphate from D-glyceraldehyde 3-phosphate and pyruvate: step 1/1. Catalyzes the acyloin condensation reaction between C atoms 2 and 3 of pyruvate and glyceraldehyde 3-phosphate to yield 1-deoxy-D-xylulose-5-phosphate (DXP). This is 1-deoxy-D-xylulose-5-phosphate synthase from Escherichia coli O139:H28 (strain E24377A / ETEC).